A 255-amino-acid chain; its full sequence is Thiazole synthase (255 aa).

The active-site Schiff-base intermediate with DXP is Lys95. 1-deoxy-D-xylulose 5-phosphate is bound by residues Gly156, 182–183, and 204–205; these read AG and NT.

It belongs to the ThiG family. As to quaternary structure, homotetramer. Forms heterodimers with either ThiH or ThiS.

The protein localises to the cytoplasm. The enzyme catalyses [ThiS sulfur-carrier protein]-C-terminal-Gly-aminoethanethioate + 2-iminoacetate + 1-deoxy-D-xylulose 5-phosphate = [ThiS sulfur-carrier protein]-C-terminal Gly-Gly + 2-[(2R,5Z)-2-carboxy-4-methylthiazol-5(2H)-ylidene]ethyl phosphate + 2 H2O + H(+). It participates in cofactor biosynthesis; thiamine diphosphate biosynthesis. In terms of biological role, catalyzes the rearrangement of 1-deoxy-D-xylulose 5-phosphate (DXP) to produce the thiazole phosphate moiety of thiamine. Sulfur is provided by the thiocarboxylate moiety of the carrier protein ThiS. In vitro, sulfur can be provided by H(2)S. The chain is Thiazole synthase from Photorhabdus laumondii subsp. laumondii (strain DSM 15139 / CIP 105565 / TT01) (Photorhabdus luminescens subsp. laumondii).